Reading from the N-terminus, the 231-residue chain is Dephospho-CoA kinase domain-containing protein (231 aa).

A DPCK domain is found at 3 to 207 (LVGLTGGIAS…RSMEYLPLRL (205 aa)). 8 to 15 (GGIASGKS) contributes to the ATP binding site.

This sequence belongs to the CoaE family.

The polypeptide is Dephospho-CoA kinase domain-containing protein (Dcakd) (Mus musculus (Mouse)).